A 662-amino-acid chain; its full sequence is Glutathione hydrolase 7 (662 aa).

Residues 1–106 (MAAENEASQE…AAECSCRQDG (106 aa)) lie on the Cytoplasmic side of the membrane. Phosphoserine is present on residues serine 17, serine 72, serine 79, and serine 83. A disordered region spans residues 26–90 (SFPRLPEDEP…DGSPLRETRK (65 aa)). Over residues 72–83 (SSSSEMGSQDGS) the composition is skewed to low complexity. A helical; Signal-anchor for type II membrane protein transmembrane segment spans residues 107 to 127 (LTVIVTACLTFATGVTVALVM). Residues 128–662 (QIYFGDPQIF…SPDAAGATIL (535 aa)) are Extracellular-facing. 9 N-linked (GlcNAc...) asparagine glycosylation sites follow: asparagine 198, asparagine 267, asparagine 283, asparagine 330, asparagine 353, asparagine 394, asparagine 519, asparagine 523, and asparagine 586.

The protein belongs to the gamma-glutamyltransferase family. Heterodimer composed of the light and heavy chains. The active site is located in the light chain. Cleaved by autocatalysis into a large and a small subunit and the autocatalytic cleavage is essential to the functional activation of the enzyme.

The protein resides in the membrane. It carries out the reaction an N-terminal (5-L-glutamyl)-[peptide] + an alpha-amino acid = 5-L-glutamyl amino acid + an N-terminal L-alpha-aminoacyl-[peptide]. The catalysed reaction is glutathione + H2O = L-cysteinylglycine + L-glutamate. The enzyme catalyses an S-substituted glutathione + H2O = an S-substituted L-cysteinylglycine + L-glutamate. It participates in sulfur metabolism; glutathione metabolism. In terms of biological role, hydrolyzes and transfers gamma-glutamyl moieties from glutathione and other gamma-glutamyl compounds to acceptors. In Mus musculus (Mouse), this protein is Glutathione hydrolase 7.